The chain runs to 399 residues: Cytohesin-3 (399 aa).

Residues 14-61 (EDLSLEEREELLDIRRRKKELIDDIERLKYEIAEVMTEIDNLTSVEES) adopt a coiled-coil conformation. One can recognise an SEC7 domain in the interval 77-206 (FNMDPKKGIQ…IIMLNTSLHN (130 aa)). In terms of domain architecture, PH spans 264–380 (NPDREGWLLK…WMKSIKASIS (117 aa)). A 1,2-diacyl-sn-glycero-3-phospho-(1D-myo-inositol-3,4,5-trisphosphate) is bound by residues 273–280 (KLGGRVKT), Arg-284, Tyr-295, Arg-305, and Asn-354. The interval 391-399 (RKRRIANKK) is C-terminal autoinhibitory region.

In terms of assembly, interacts with TAMALIN. Interacts with FRMD4A. Interacts with FRMD4B.

It is found in the cytoplasm. Its subcellular location is the cytosol. The protein localises to the cell membrane. The protein resides in the cell junction. It localises to the adherens junction. It is found in the tight junction. Its function is as follows. Promotes guanine-nucleotide exchange on ARF1. Promotes the activation of ARF factors through replacement of GDP with GTP. Plays a role in the epithelial polarization. The sequence is that of Cytohesin-3 (Cyth3) from Mus musculus (Mouse).